Consider the following 56-residue polypeptide: Per os infectivity factor AC110 (56 aa).

Its function is as follows. Plays an essential role in the process of oral infection. May participate in the crossing of occlusion-derived virions through the host peritrophic membrane during oral infection. The polypeptide is Per os infectivity factor AC110 (Autographa californica nuclear polyhedrosis virus (AcMNPV)).